The sequence spans 581 residues: Zinc finger protein 674 (581 aa).

The region spanning 8–79 (LTFKDVFVDF…DGGTPVRTCA (72 aa)) is the KRAB domain. C2H2-type zinc fingers lie at residues 224–246 (YKCT…QRTH), 252–274 (YECC…QRTH), 280–302 (YECS…QRTH), and 308–330 (FVCD…EKTH). A compositionally biased stretch (basic and acidic residues) spans 357 to 371 (PQCSEHGKASDEKPS). The interval 357–377 (PQCSEHGKASDEKPSPTKHWR) is disordered. 7 C2H2-type zinc fingers span residues 385–407 (YECS…QRIH), 413–435 (YECS…HRTH), 441–463 (YECR…QRMH), 469–491 (YKCN…QRIH), 497–519 (YECT…QRIH), 525–547 (YKCS…HRTH), and 553–575 (YECR…QRSH).

The protein belongs to the krueppel C2H2-type zinc-finger protein family. Expressed in testis.

It localises to the nucleus. In terms of biological role, may be involved in transcriptional regulation. This chain is Zinc finger protein 674 (ZNF674), found in Homo sapiens (Human).